A 181-amino-acid chain; its full sequence is Large ribosomal subunit protein uL22 (181 aa).

The tract at residues 157-181 is disordered; the sequence is PEAAKKPGKKTSAVEKSKKATAATH.

It belongs to the universal ribosomal protein uL22 family.

In Biphyllus lunatus (Beetle), this protein is Large ribosomal subunit protein uL22 (RpL17).